A 298-amino-acid polypeptide reads, in one-letter code: Acetylglutamate kinase (298 aa).

Substrate is bound by residues Gly-69–Gly-70, Arg-91, and Asn-191.

This sequence belongs to the acetylglutamate kinase family. ArgB subfamily.

It localises to the cytoplasm. The catalysed reaction is N-acetyl-L-glutamate + ATP = N-acetyl-L-glutamyl 5-phosphate + ADP. Its pathway is amino-acid biosynthesis; L-arginine biosynthesis; N(2)-acetyl-L-ornithine from L-glutamate: step 2/4. Its function is as follows. Catalyzes the ATP-dependent phosphorylation of N-acetyl-L-glutamate. The protein is Acetylglutamate kinase of Neisseria gonorrhoeae (strain ATCC 700825 / FA 1090).